The sequence spans 345 residues: Selenide, water dikinase (345 aa).

Residue cysteine 16 is part of the active site. Residues lysine 19 and 46-48 (TSD) contribute to the ATP site. Aspartate 49 provides a ligand contact to Mg(2+). Residues aspartate 66, aspartate 89, and 136 to 138 (GHT) each bind ATP. Aspartate 89 is a Mg(2+) binding site. Aspartate 224 serves as a coordination point for Mg(2+).

The protein belongs to the selenophosphate synthase 1 family. Class I subfamily. Homodimer. Mg(2+) is required as a cofactor.

The catalysed reaction is hydrogenselenide + ATP + H2O = selenophosphate + AMP + phosphate + 2 H(+). Functionally, synthesizes selenophosphate from selenide and ATP. In Clostridium botulinum (strain Alaska E43 / Type E3), this protein is Selenide, water dikinase.